The following is a 450-amino-acid chain: uncharacterized protein (450 aa).

One can recognise a TRAM domain in the interval 1–58 (MQKNQIVDLEITDLSYEAMGVAHLDGMTVFVNNALPGEIVSAKLLKVKKNFAFAKIEK). S-adenosyl-L-methionine is bound by residues glutamine 280, tyrosine 309, glutamate 330, and aspartate 378. The Nucleophile role is filled by cysteine 405.

It belongs to the class I-like SAM-binding methyltransferase superfamily. RNA M5U methyltransferase family.

This is an uncharacterized protein from Lactobacillus johnsonii (strain CNCM I-12250 / La1 / NCC 533).